Here is a 326-residue protein sequence, read N- to C-terminus: MDYSHQTSLVPCGQDKYISKNELLLHLKTYNLYYEGQNLQLRHREEEDEFIVEGLLNISWGLRRPIRLQMQDDNERIRPPPSSSSWHSGCNLGAQGTTLKPLTVPKVQISEVDAPPEGDQMPSSTDSRGLKPLQEDTPQLMRTRSDVGVRRRGNVRTPSDQRRIRRHRFSINGHFYNHKTSVFTPAYGSVTNVRINSTMTTPQVLKLLLNKFKIENSAEEFALYVVHTSGEKQKLKATDYPLIARILQGPCEQISKVFLMEKDQVEEVTYDVAQYIKFEMPVLKSFIQKLQEEEDREVKKLMRKYTVLRLMIRQRLEEIAETPATI.

Residues 111–133 (EVDAPPEGDQMPSSTDSRGLKPL) are disordered. A Ras-associating domain is found at 176–264 (YNHKTSVFTP…SKVFLMEKDQ (89 aa)). Residues 272–319 (VAQYIKFEMPVLKSFIQKLQEEEDREVKKLMRKYTVLRLMIRQRLEEI) form the SARAH domain.

Interacts directly with activated KRAS in a GTP-dependent manner. Interacts (via SARAH domain) with STK3/MST2 and STK4/MST1. Post-translationally, phosphorylated by STK3/MST2 and STK4/MST1. Widely expressed with highest levels in brain, placenta, peripheral blood and lung. Frequently down-regulated in lung tumor cell lines.

It localises to the nucleus. Its subcellular location is the cytoplasm. It is found in the chromosome. The protein localises to the centromere. The protein resides in the kinetochore. Its function is as follows. Potential tumor suppressor. Acts as a KRAS-specific effector protein. May promote apoptosis and cell cycle arrest. Stabilizes STK3/MST2 by protecting it from proteasomal degradation. This is Ras association domain-containing protein 2 (RASSF2) from Homo sapiens (Human).